Consider the following 483-residue polypeptide: Zinc metalloproteinase/disintegrin VMP-II (483 aa).

The signal sequence occupies residues 1-20 (MIQVLLVTLCLAAFPYQGNS). A propeptide spanning residues 21-191 (IILESGNVND…KASQLNLTPE (171 aa)) is cleaved from the precursor. The region spanning 198–394 (RYIELVVVAD…HNPQCMLNEP (197 aa)) is the Peptidase M12B domain. Ca(2+)-binding residues include Glu201 and Asp285. 3 disulfide bridges follow: Cys309-Cys389, Cys349-Cys373, and Cys351-Cys356. His334 contributes to the Zn(2+) binding site. The active site involves Glu335. Zn(2+) is bound by residues His338 and His344. Residues Cys389 and Asn392 each coordinate Ca(2+). The propeptide occupies 395–414 (LRTDIVSTPVSGNELWETGE). Positions 402–483 (TPVSGNELWE…AGCPRNPFHA (82 aa)) constitute a Disintegrin domain. 4 cysteine pairs are disulfide-bonded: Cys425–Cys448, Cys439–Cys445, Cys444–Cys469, and Cys457–Cys476. The short motif at 461–463 (KGD) is the Cell attachment site; atypical (KGD) element.

The protein belongs to the venom metalloproteinase (M12B) family. P-II subfamily. P-IIe sub-subfamily. In terms of assembly, heterodimer; disulfide-linked (disintegrin). Zn(2+) serves as cofactor. As to expression, expressed by the venom gland.

The protein resides in the secreted. Inhibited by EDTA and 1,10-phenanthroline, but not by PMSF. Its function is as follows. Has fibrinolytic activity. The recombinant enzyme cleaves both alpha- (FGA) and beta-chains (FGB) of fibrinogen, but not the gamma-chain. The recombinant protein does not produce hemorrhage in mice and does not have effect on ADP- or collagen-stimulated platelet aggregation. In terms of biological role, inhibits platelet aggregation induced by ADP, thrombin, platelet-activating factor and collagen. Acts by inhibiting fibrinogen interaction with platelet receptors GPIIb/GPIIIa (ITGA2B/ITGB3). The polypeptide is Zinc metalloproteinase/disintegrin VMP-II (Agkistrodon piscivorus leucostoma (Western cottonmouth)).